The chain runs to 75 residues: Small ribosomal subunit protein bS18 (75 aa).

The protein belongs to the bacterial ribosomal protein bS18 family. As to quaternary structure, part of the 30S ribosomal subunit. Forms a tight heterodimer with protein bS6.

Binds as a heterodimer with protein bS6 to the central domain of the 16S rRNA, where it helps stabilize the platform of the 30S subunit. This is Small ribosomal subunit protein bS18 from Shewanella frigidimarina (strain NCIMB 400).